Here is a 243-residue protein sequence, read N- to C-terminus: tRNA pseudouridine synthase A (243 aa).

The active-site Nucleophile is Asp53. Tyr111 serves as a coordination point for substrate.

It belongs to the tRNA pseudouridine synthase TruA family. Homodimer.

The catalysed reaction is uridine(38/39/40) in tRNA = pseudouridine(38/39/40) in tRNA. Formation of pseudouridine at positions 38, 39 and 40 in the anticodon stem and loop of transfer RNAs. The polypeptide is tRNA pseudouridine synthase A (Chlorobium phaeovibrioides (strain DSM 265 / 1930) (Prosthecochloris vibrioformis (strain DSM 265))).